The chain runs to 338 residues: Protein RecA (338 aa).

68–75 (GPESSGKT) is an ATP binding site.

Belongs to the RecA family.

It localises to the cytoplasm. Functionally, can catalyze the hydrolysis of ATP in the presence of single-stranded DNA, the ATP-dependent uptake of single-stranded DNA by duplex DNA, and the ATP-dependent hybridization of homologous single-stranded DNAs. It interacts with LexA causing its activation and leading to its autocatalytic cleavage. The protein is Protein RecA of Citrifermentans bemidjiense (strain ATCC BAA-1014 / DSM 16622 / JCM 12645 / Bem) (Geobacter bemidjiensis).